A 230-amino-acid polypeptide reads, in one-letter code: Small ribosomal subunit protein uS3 (230 aa).

Positions 39–107 (VRKYLADKLQ…PAQINIAEIR (69 aa)) constitute a KH type-2 domain.

Belongs to the universal ribosomal protein uS3 family. As to quaternary structure, part of the 30S ribosomal subunit. Forms a tight complex with proteins S10 and S14.

Its function is as follows. Binds the lower part of the 30S subunit head. Binds mRNA in the 70S ribosome, positioning it for translation. The protein is Small ribosomal subunit protein uS3 of Shewanella oneidensis (strain ATCC 700550 / JCM 31522 / CIP 106686 / LMG 19005 / NCIMB 14063 / MR-1).